A 132-amino-acid polypeptide reads, in one-letter code: Large ribosomal subunit protein bL12 (132 aa).

Residues 112–132 (KEAADKAKTQLEGAGGTINLK) are disordered.

Belongs to the bacterial ribosomal protein bL12 family. Homodimer. Part of the ribosomal stalk of the 50S ribosomal subunit. Forms a multimeric L10(L12)X complex, where L10 forms an elongated spine to which 2 to 4 L12 dimers bind in a sequential fashion. Binds GTP-bound translation factors.

In terms of biological role, forms part of the ribosomal stalk which helps the ribosome interact with GTP-bound translation factors. Is thus essential for accurate translation. This Leifsonia xyli subsp. xyli (strain CTCB07) protein is Large ribosomal subunit protein bL12.